We begin with the raw amino-acid sequence, 364 residues long: PHD finger protein 6 (364 aa).

Ser2 is subject to N-acetylserine. 2 consecutive short sequence motifs (nuclear localization signal) follow at residues 13 to 16 and 129 to 133; these read RQRK and RKHKK. Residues 14-52 form a C2HC pre-PHD-type 1 zinc finger; sequence QRKCGFCKSNRDKECGQLLISENQKVAAHHKCMLFSSAL. Residues 14-132 are extended PHD1 domain (ePHD1); the sequence is QRKCGFCKSN…IYMVYCRKHK (119 aa). The PHD-type 1 zinc finger occupies 80 to 132; it reads LMCSLCHCPGATIGCDVKTCHRTYHYHCALHDKAQIREKPSQGIYMVYCRKHK. 3 positions are modified to phosphoserine: Ser138, Ser145, and Ser155. The disordered stretch occupies residues 139–211; that stretch reads EADLEESFNE…RSSPNDTRPK (73 aa). The Nucleolar localization signal signature appears at 157-169; that stretch reads KTKKKSRKGRPRK. The segment covering 157 to 171 has biased composition (basic residues); sequence KTKKKSRKGRPRKTN. A Glycyl lysine isopeptide (Lys-Gly) (interchain with G-Cter in SUMO2) cross-link involves residue Lys173. Phosphoserine occurs at positions 183 and 199. The segment at 209–249 adopts a C2HC pre-PHD-type 2 zinc-finger fold; it reads RPKCGFCHVGEEENEARGKLHIFNAKKAAAHYKCMLFSSGT. The tract at residues 209–330 is extended PHD2 domain (ePHD2); the sequence is RPKCGFCHVG…IYKLYCKNHS (122 aa). Lys227 is covalently cross-linked (Glycyl lysine isopeptide (Lys-Gly) (interchain with G-Cter in SUMO2)). The segment at 278-330 adopts a PHD-type 2 zinc-finger fold; that stretch reads MKCTLCSQPGATIGCEIKACVKTYHYHCGVQDKAKYIENMSRGIYKLYCKNHS. The disordered stretch occupies residues 330-364; it reads SGNDERDEEDEERESKSRGRVAIDQQLTQQQLNGN. A compositionally biased stretch (polar residues) spans 354 to 364; it reads QQLTQQQLNGN. Thr357 bears the Phosphothreonine mark.

As to quaternary structure, interacts with UBTF. Interacts with the NuRD complex component RBBP4 (via the nucleolar localization motif), the interaction mediates transcriptional repression activity. At 12.5 dpc it is highly expressed in the embryonic central nervous system and at lower levels in other tissues. Very low levels present throughout the adult brain.

It is found in the nucleus. The protein resides in the nucleolus. Its subcellular location is the chromosome. It localises to the centromere. The protein localises to the kinetochore. Transcriptional regulator that associates with ribosomal RNA promoters and suppresses ribosomal RNA (rRNA) transcription. In Mus musculus (Mouse), this protein is PHD finger protein 6 (Phf6).